The chain runs to 213 residues: Imidazole glycerol phosphate synthase subunit HisH (213 aa).

Positions 4–211 (NLGVIDYGMG…LHWLHQGAEP (208 aa)) constitute a Glutamine amidotransferase type-1 domain. The active-site Nucleophile is C82. Active-site residues include H186 and E188.

Heterodimer of HisH and HisF.

The protein localises to the cytoplasm. It catalyses the reaction 5-[(5-phospho-1-deoxy-D-ribulos-1-ylimino)methylamino]-1-(5-phospho-beta-D-ribosyl)imidazole-4-carboxamide + L-glutamine = D-erythro-1-(imidazol-4-yl)glycerol 3-phosphate + 5-amino-1-(5-phospho-beta-D-ribosyl)imidazole-4-carboxamide + L-glutamate + H(+). The enzyme catalyses L-glutamine + H2O = L-glutamate + NH4(+). It functions in the pathway amino-acid biosynthesis; L-histidine biosynthesis; L-histidine from 5-phospho-alpha-D-ribose 1-diphosphate: step 5/9. Functionally, IGPS catalyzes the conversion of PRFAR and glutamine to IGP, AICAR and glutamate. The HisH subunit catalyzes the hydrolysis of glutamine to glutamate and ammonia as part of the synthesis of IGP and AICAR. The resulting ammonia molecule is channeled to the active site of HisF. The protein is Imidazole glycerol phosphate synthase subunit HisH of Synechococcus sp. (strain CC9902).